The chain runs to 101 residues: Urease subunit beta (101 aa).

It belongs to the urease beta subunit family. In terms of assembly, heterotrimer of UreA (gamma), UreB (beta) and UreC (alpha) subunits. Three heterotrimers associate to form the active enzyme.

Its subcellular location is the cytoplasm. The enzyme catalyses urea + 2 H2O + H(+) = hydrogencarbonate + 2 NH4(+). The protein operates within nitrogen metabolism; urea degradation; CO(2) and NH(3) from urea (urease route): step 1/1. The polypeptide is Urease subunit beta (Hahella chejuensis (strain KCTC 2396)).